Consider the following 274-residue polypeptide: 2,3,4,5-tetrahydropyridine-2,6-dicarboxylate N-succinyltransferase (274 aa).

The substrate site is built by R104 and D141.

This sequence belongs to the transferase hexapeptide repeat family. In terms of assembly, homotrimer.

The protein resides in the cytoplasm. The catalysed reaction is (S)-2,3,4,5-tetrahydrodipicolinate + succinyl-CoA + H2O = (S)-2-succinylamino-6-oxoheptanedioate + CoA. The protein operates within amino-acid biosynthesis; L-lysine biosynthesis via DAP pathway; LL-2,6-diaminopimelate from (S)-tetrahydrodipicolinate (succinylase route): step 1/3. This Escherichia coli O127:H6 (strain E2348/69 / EPEC) protein is 2,3,4,5-tetrahydropyridine-2,6-dicarboxylate N-succinyltransferase.